The primary structure comprises 391 residues: Imidazolonepropionase (391 aa).

Residues H72 and H74 each coordinate Fe(3+). Residues H72 and H74 each coordinate Zn(2+). 4-imidazolone-5-propanoate contacts are provided by R81, Y139, and H166. Position 139 (Y139) interacts with N-formimidoyl-L-glutamate. H229 provides a ligand contact to Fe(3+). H229 is a binding site for Zn(2+). Q232 serves as a coordination point for 4-imidazolone-5-propanoate. Residue D303 coordinates Fe(3+). Zn(2+) is bound at residue D303. The N-formimidoyl-L-glutamate site is built by N305 and G307. A 4-imidazolone-5-propanoate-binding site is contributed by S308.

This sequence belongs to the metallo-dependent hydrolases superfamily. HutI family. Zn(2+) serves as cofactor. It depends on Fe(3+) as a cofactor.

Its subcellular location is the cytoplasm. It catalyses the reaction 4-imidazolone-5-propanoate + H2O = N-formimidoyl-L-glutamate. The protein operates within amino-acid degradation; L-histidine degradation into L-glutamate; N-formimidoyl-L-glutamate from L-histidine: step 3/3. Catalyzes the hydrolytic cleavage of the carbon-nitrogen bond in imidazolone-5-propanoate to yield N-formimidoyl-L-glutamate. It is the third step in the universal histidine degradation pathway. The polypeptide is Imidazolonepropionase (Streptomyces coelicolor (strain ATCC BAA-471 / A3(2) / M145)).